A 429-amino-acid polypeptide reads, in one-letter code: Formate-dependent phosphoribosylglycinamide formyltransferase (429 aa).

N(1)-(5-phospho-beta-D-ribosyl)glycinamide is bound by residues 26–27 (EL) and Glu86. ATP-binding positions include Arg118, Lys159, 199-202 (EEHI), and Glu207. Residues 123–319 (ETLVKEAKVP…EFGLHLRAVL (197 aa)) form the ATP-grasp domain. Positions 276 and 288 each coordinate Mg(2+). N(1)-(5-phospho-beta-D-ribosyl)glycinamide is bound by residues Asp295, Lys375, and 382–383 (RR).

It belongs to the PurK/PurT family. Homodimer.

The catalysed reaction is N(1)-(5-phospho-beta-D-ribosyl)glycinamide + formate + ATP = N(2)-formyl-N(1)-(5-phospho-beta-D-ribosyl)glycinamide + ADP + phosphate + H(+). It participates in purine metabolism; IMP biosynthesis via de novo pathway; N(2)-formyl-N(1)-(5-phospho-D-ribosyl)glycinamide from N(1)-(5-phospho-D-ribosyl)glycinamide (formate route): step 1/1. Functionally, involved in the de novo purine biosynthesis. Catalyzes the transfer of formate to 5-phospho-ribosyl-glycinamide (GAR), producing 5-phospho-ribosyl-N-formylglycinamide (FGAR). Formate is provided by PurU via hydrolysis of 10-formyl-tetrahydrofolate. The polypeptide is Formate-dependent phosphoribosylglycinamide formyltransferase (Pyrococcus abyssi (strain GE5 / Orsay)).